Reading from the N-terminus, the 659-residue chain is tRNA 5-methylaminomethyl-2-thiouridine biosynthesis bifunctional protein MnmC (659 aa).

A tRNA (mnm(5)s(2)U34)-methyltransferase region spans residues 1–236 (MKPVMPHAQL…KWEILRGEFL (236 aa)). The segment at 267–659 (IGAGLAGCAT…FALRRLIRGK (393 aa)) is FAD-dependent cmnm(5)s(2)U34 oxidoreductase.

This sequence in the N-terminal section; belongs to the methyltransferase superfamily. tRNA (mnm(5)s(2)U34)-methyltransferase family. It in the C-terminal section; belongs to the DAO family. FAD is required as a cofactor.

The protein localises to the cytoplasm. The enzyme catalyses 5-aminomethyl-2-thiouridine(34) in tRNA + S-adenosyl-L-methionine = 5-methylaminomethyl-2-thiouridine(34) in tRNA + S-adenosyl-L-homocysteine + H(+). In terms of biological role, catalyzes the last two steps in the biosynthesis of 5-methylaminomethyl-2-thiouridine (mnm(5)s(2)U) at the wobble position (U34) in tRNA. Catalyzes the FAD-dependent demodification of cmnm(5)s(2)U34 to nm(5)s(2)U34, followed by the transfer of a methyl group from S-adenosyl-L-methionine to nm(5)s(2)U34, to form mnm(5)s(2)U34. The polypeptide is tRNA 5-methylaminomethyl-2-thiouridine biosynthesis bifunctional protein MnmC (Pseudomonas fluorescens (strain Pf0-1)).